The chain runs to 575 residues: MGRTLAVPTPYGCIGCKLPQPDYPPALIVFMFCAMVITIVVDLIGNSMVILAVSKNKKLRNSGNVFVVSLSVADMLVAIYPYPLMLHAMAIGGWDLSKLQCQMVGFITGLSVVGSIFNIMAIAINRYCYICHSLQYERIFSVRNTCIYLAVTWIMTVLAVLPNMYIGTIEYDPRTYTCIFNYVNNPAFAVTIVCIHFVLPLLIVGFCYVKIWTKVLAARDPAGQNPDNQLAEVRNFLTMFVIFLLFAVCWCPINALTVLVAVNPKEMAGKIPNWVYLAAYFIAYFNSCLNAVIYGVLNENFRREYWTIFHAMRHPVLFLSGLLTDVREMQEAQAHTHARARARTQAHEQDHAHACPAVEEIPMSVRNVPLPGHGAAGQPECVSGHPKPASGHSRSVSARRKSASAHPKSASGQSKSATVYPKPTSVHFKPSSVYFKADSVYFKPSSSHPKPITGPSKTAISPATSFPKPTTGYTQHATIHSEPTTLDYLEPITTSHSKPVIASHSELAASCHLECNIFDLSDPTSSPASDSSNSAASLLDPTAAAAATVNPTVVTTDYHEIVLIDVDADSDEMAV.

Over 1–30 (MGRTLAVPTPYGCIGCKLPQPDYPPALIVF) the chain is Extracellular. A helical transmembrane segment spans residues 31–51 (MFCAMVITIVVDLIGNSMVIL). The Cytoplasmic portion of the chain corresponds to 52 to 64 (AVSKNKKLRNSGN). Residues 65-85 (VFVVSLSVADMLVAIYPYPLM) traverse the membrane as a helical segment. Residues 86–103 (LHAMAIGGWDLSKLQCQM) lie on the Extracellular side of the membrane. A disulfide bridge links Cys-101 with Cys-178. The chain crosses the membrane as a helical span at residues 104–124 (VGFITGLSVVGSIFNIMAIAI). Residues 125 to 143 (NRYCYICHSLQYERIFSVR) are Cytoplasmic-facing. A helical transmembrane segment spans residues 144 to 164 (NTCIYLAVTWIMTVLAVLPNM). Residues 165–188 (YIGTIEYDPRTYTCIFNYVNNPAF) lie on the Extracellular side of the membrane. Residues 189–209 (AVTIVCIHFVLPLLIVGFCYV) form a helical membrane-spanning segment. The Cytoplasmic segment spans residues 210 to 239 (KIWTKVLAARDPAGQNPDNQLAEVRNFLTM). A helical transmembrane segment spans residues 240–260 (FVIFLLFAVCWCPINALTVLV). The Extracellular portion of the chain corresponds to 261-273 (AVNPKEMAGKIPN). A helical membrane pass occupies residues 274-294 (WVYLAAYFIAYFNSCLNAVIY). At 295-575 (GVLNENFRRE…VDADSDEMAV (281 aa)) the chain is on the cytoplasmic side. Disordered stretches follow at residues 368–421 (VPLP…TVYP) and 446–474 (SSHPKPITGPSKTAISPATSFPKPTTGYT). The span at 455-474 (PSKTAISPATSFPKPTTGYT) shows a compositional bias: polar residues.

Belongs to the G-protein coupled receptor 1 family. In terms of assembly, homodimer, and heterodimer with MTNR1A and MTNR1B. Interacts with KAT5. Interacts with RTN4 isoform A/NOGO-A. Interacts with TGFBR1.

It localises to the cell membrane. Functionally, g protein-coupled receptor that plays a role in numerous physiological processes including regulation of energy metabolism, neurite outgrowth or cell migration. Promotes self-renewal and neuronal differentiation of neural progenitor cells through activation of the NOTCH and WNT/beta-catenin signaling pathways. Modulates the KAT5-dependent glucocorticoid receptor signaling by modulating KAT5 subcellular compartmentalisation. Also plays a role in the activation TGFBR1 in the absence of TGFBR2 by interfering with FKBP1A binding to TGFBR1, leading to induction of both canonical and non-canonical SMAD signaling pathways resulting in inhibition of proliferation or promotion of migration. In Ovis aries (Sheep), this protein is Melatonin-related receptor (GPR50).